Reading from the N-terminus, the 683-residue chain is DNA-directed RNA polymerase subunit beta' (683 aa).

Zn(2+) contacts are provided by Cys-69, Cys-71, Cys-87, and Cys-90. The Mg(2+) site is built by Asp-489, Asp-491, and Asp-493.

It belongs to the RNA polymerase beta' chain family. RpoC1 subfamily. In plastids the minimal PEP RNA polymerase catalytic core is composed of four subunits: alpha, beta, beta', and beta''. When a (nuclear-encoded) sigma factor is associated with the core the holoenzyme is formed, which can initiate transcription. The cofactor is Mg(2+). It depends on Zn(2+) as a cofactor.

It is found in the plastid. The protein resides in the chloroplast. The catalysed reaction is RNA(n) + a ribonucleoside 5'-triphosphate = RNA(n+1) + diphosphate. In terms of biological role, DNA-dependent RNA polymerase catalyzes the transcription of DNA into RNA using the four ribonucleoside triphosphates as substrates. In Saccharum hybrid (Sugarcane), this protein is DNA-directed RNA polymerase subunit beta'.